The sequence spans 429 residues: Bifunctional protein GlmU (429 aa).

The tract at residues 1–223 (MKTSILILAA…EDEFMGINDK (223 aa)) is pyrophosphorylase. UDP-N-acetyl-alpha-D-glucosamine is bound by residues 8-11 (LAAG), Lys-22, Gln-74, and 81-82 (GT). Asp-102 contributes to the Mg(2+) binding site. UDP-N-acetyl-alpha-D-glucosamine contacts are provided by Gly-135, Glu-149, Asn-164, and Asn-221. Residue Asn-221 coordinates Mg(2+). A linker region spans residues 224 to 244 (FELSIAENFMQEKIKKYWMQQ). The N-acetyltransferase stretch occupies residues 245-429 (GVIFHLPQST…KNYYYKKFQK (185 aa)). Positions 308 and 325 each coordinate UDP-N-acetyl-alpha-D-glucosamine. His-336 functions as the Proton acceptor in the catalytic mechanism. The UDP-N-acetyl-alpha-D-glucosamine site is built by Tyr-339 and Asn-350. Acetyl-CoA contacts are provided by residues 359-360 (NY), Ser-378, Ala-396, and Arg-413.

This sequence in the N-terminal section; belongs to the N-acetylglucosamine-1-phosphate uridyltransferase family. In the C-terminal section; belongs to the transferase hexapeptide repeat family. As to quaternary structure, homotrimer. Mg(2+) is required as a cofactor.

The protein resides in the cytoplasm. The catalysed reaction is alpha-D-glucosamine 1-phosphate + acetyl-CoA = N-acetyl-alpha-D-glucosamine 1-phosphate + CoA + H(+). It carries out the reaction N-acetyl-alpha-D-glucosamine 1-phosphate + UTP + H(+) = UDP-N-acetyl-alpha-D-glucosamine + diphosphate. It participates in nucleotide-sugar biosynthesis; UDP-N-acetyl-alpha-D-glucosamine biosynthesis; N-acetyl-alpha-D-glucosamine 1-phosphate from alpha-D-glucosamine 6-phosphate (route II): step 2/2. It functions in the pathway nucleotide-sugar biosynthesis; UDP-N-acetyl-alpha-D-glucosamine biosynthesis; UDP-N-acetyl-alpha-D-glucosamine from N-acetyl-alpha-D-glucosamine 1-phosphate: step 1/1. The protein operates within bacterial outer membrane biogenesis; LPS lipid A biosynthesis. Catalyzes the last two sequential reactions in the de novo biosynthetic pathway for UDP-N-acetylglucosamine (UDP-GlcNAc). The C-terminal domain catalyzes the transfer of acetyl group from acetyl coenzyme A to glucosamine-1-phosphate (GlcN-1-P) to produce N-acetylglucosamine-1-phosphate (GlcNAc-1-P), which is converted into UDP-GlcNAc by the transfer of uridine 5-monophosphate (from uridine 5-triphosphate), a reaction catalyzed by the N-terminal domain. This is Bifunctional protein GlmU from Campylobacter jejuni subsp. doylei (strain ATCC BAA-1458 / RM4099 / 269.97).